Reading from the N-terminus, the 156-residue chain is Probable cyclic pyranopterin monophosphate synthase (156 aa).

Residues 73 to 75 and 109 to 110 each bind substrate; these read LCH and ME. D124 is a catalytic residue.

Belongs to the MoaC family. As to quaternary structure, homohexamer; trimer of dimers.

It carries out the reaction (8S)-3',8-cyclo-7,8-dihydroguanosine 5'-triphosphate = cyclic pyranopterin phosphate + diphosphate. It functions in the pathway cofactor biosynthesis; molybdopterin biosynthesis. Catalyzes the conversion of (8S)-3',8-cyclo-7,8-dihydroguanosine 5'-triphosphate to cyclic pyranopterin monophosphate (cPMP). The chain is Probable cyclic pyranopterin monophosphate synthase from Pyrococcus furiosus (strain ATCC 43587 / DSM 3638 / JCM 8422 / Vc1).